Consider the following 543-residue polypeptide: CTP synthase (543 aa).

Residues 1–265 are amidoligase domain; the sequence is MARYIFITGG…DDEVLAAFAI (265 aa). Position 13 (S13) interacts with CTP. S13 is a binding site for UTP. Residue 14-19 coordinates ATP; the sequence is SLGKGL. Y54 serves as a coordination point for L-glutamine. D71 serves as a coordination point for ATP. The Mg(2+) site is built by D71 and E139. CTP is bound by residues 146-148, 186-191, and K222; these read DIE and KTKPTQ. UTP contacts are provided by residues 186–191 and K222; that span reads KTKPTQ. 238-240 contributes to the ATP binding site; sequence RDA. A Glutamine amidotransferase type-1 domain is found at 291 to 542; that stretch reads TIAIVGKYTG…IEAALVRSRL (252 aa). G353 lines the L-glutamine pocket. C380 serves as the catalytic Nucleophile; for glutamine hydrolysis. Residues 381–384, E404, and R470 each bind L-glutamine; that span reads FGMQ. Residues H515 and E517 contribute to the active site.

The protein belongs to the CTP synthase family. Homotetramer.

The catalysed reaction is UTP + L-glutamine + ATP + H2O = CTP + L-glutamate + ADP + phosphate + 2 H(+). It catalyses the reaction L-glutamine + H2O = L-glutamate + NH4(+). The enzyme catalyses UTP + NH4(+) + ATP = CTP + ADP + phosphate + 2 H(+). It participates in pyrimidine metabolism; CTP biosynthesis via de novo pathway; CTP from UDP: step 2/2. Allosterically activated by GTP, when glutamine is the substrate; GTP has no effect on the reaction when ammonia is the substrate. The allosteric effector GTP functions by stabilizing the protein conformation that binds the tetrahedral intermediate(s) formed during glutamine hydrolysis. Inhibited by the product CTP, via allosteric rather than competitive inhibition. Functionally, catalyzes the ATP-dependent amination of UTP to CTP with either L-glutamine or ammonia as the source of nitrogen. Regulates intracellular CTP levels through interactions with the four ribonucleotide triphosphates. In Rhodopseudomonas palustris (strain BisB5), this protein is CTP synthase.